Here is a 227-residue protein sequence, read N- to C-terminus: Agamous-like MADS-box protein AGL17 (227 aa).

One can recognise an MADS-box domain in the interval 3 to 57 (RGKIVIQKIDDSTSRQVTFSKRRKGLIKKAKELAILCDAEVCLIIFSNTDKLYDF). Residues 86–176 (VKFWQREAET…SRKVQRIHQE (91 aa)) form the K-box domain.

As to expression, preferentially expressed in roots.

Its subcellular location is the nucleus. Functionally, probable transcription factor. In Arabidopsis thaliana (Mouse-ear cress), this protein is Agamous-like MADS-box protein AGL17 (AGL17).